The primary structure comprises 259 residues: Polycomb group RING finger protein 1 (259 aa).

Ala2 carries the post-translational modification N-acetylalanine. Phosphoserine is present on Ser3. Lys24 participates in a covalent cross-link: Glycyl lysine isopeptide (Lys-Gly) (interchain with G-Cter in SUMO2). The RING-type zinc-finger motif lies at 47–86 (CCLCAGYFVDATTITECLHTFCKSCIVKYLQTSKYCPMCN). A necessary for repressor activity region spans residues 86–247 (NIKIHETQPL…LSHWFGKPSP (162 aa)). Lys88 is covalently cross-linked (Glycyl lysine isopeptide (Lys-Gly) (interchain with G-Cter in SUMO2)). Residues 150 to 255 (LPFSSFDHSK…SPLLLQYSVK (106 aa)) are required for the interaction with the KDM2B-SKP1 heterodimeric complex. The tract at residues 167–255 (EQLSLCLERL…SPLLLQYSVK (89 aa)) is RING-finger and WD40-associated ubiquitin-like domain (RAWUL); sufficient for interaction with BCOR and BCORL1.

In terms of assembly, interacts with BCORL1, forming heterodimers. The PCGF1-BCORL1 heterodimeric complex interacts with the KDM2B-SKP1 heterodimeric complex to form a homotetrameric polycomb repression complex 1 (PRC1.1). Component of the repressive BCOR complex containing a Polycomb group subcomplex at least composed of RYBP, RING1 and RNF2/RING2. Specifically interacts with BCOR, RING1 and RNF2/RING2. Component of a PRC1-like complex. Interacts with CBX6, CBX7 and CBX8. Interacts with DPPA4, NANOG, POU5F1 and RYBP.

The protein resides in the nucleus. Component of the Polycomb group (PcG) multiprotein BCOR complex, a complex required to maintain the transcriptionally repressive state of some genes, such as BCL6 and the cyclin-dependent kinase inhibitor, CDKN1A. Transcriptional repressor that may be targeted to the DNA by BCL6; this transcription repressor activity may be related to PKC signaling pathway. Represses CDKN1A expression by binding to its promoter, and this repression is dependent on the retinoic acid response element (RARE element). Promotes cell cycle progression and enhances cell proliferation as well. May have a positive role in tumor cell growth by down-regulating CDKN1A. Component of a Polycomb group (PcG) multiprotein PRC1-like complex, a complex class required to maintain the transcriptionally repressive state of many genes, including Hox genes, throughout development. PcG PRC1 complex acts via chromatin remodeling and modification of histones; it mediates monoubiquitination of histone H2A 'Lys-119', rendering chromatin heritably changed in its expressibility. Within the PRC1-like complex, regulates RNF2 ubiquitin ligase activity. Regulates the expression of DPPA4 and NANOG in the NT2 embryonic carcinoma cells. The protein is Polycomb group RING finger protein 1 (PCGF1) of Bos taurus (Bovine).